The primary structure comprises 245 residues: Orotidine 5'-phosphate decarboxylase (245 aa).

Residues Asp22, Lys44, 71 to 80 (DLKFHDIPNT), Thr131, Arg192, Gln201, Gly221, and Arg222 each bind substrate. Lys73 functions as the Proton donor in the catalytic mechanism.

This sequence belongs to the OMP decarboxylase family. Type 1 subfamily. As to quaternary structure, homodimer.

It catalyses the reaction orotidine 5'-phosphate + H(+) = UMP + CO2. The protein operates within pyrimidine metabolism; UMP biosynthesis via de novo pathway; UMP from orotate: step 2/2. Functionally, catalyzes the decarboxylation of orotidine 5'-monophosphate (OMP) to uridine 5'-monophosphate (UMP). The protein is Orotidine 5'-phosphate decarboxylase of Salmonella paratyphi A (strain ATCC 9150 / SARB42).